The following is a 122-amino-acid chain: Glucagon-2 (122 aa).

A signal peptide spans 1–21; the sequence is MTSLHSLAGLLLLMIIQSSWQ. 2 consecutive propeptides follow at residues 83 to 86 and Glu122; that span reads NGLF.

This sequence belongs to the glucagon family.

It is found in the secreted. In terms of biological role, promotes hydrolysis of glycogen and lipids, and raises the blood sugar level. The sequence is that of Glucagon-2 (gcg2) from Lophius americanus (American angler).